Reading from the N-terminus, the 192-residue chain is Fe/S biogenesis protein NfuA (192 aa).

Residues Cys150 and Cys153 each contribute to the [4Fe-4S] cluster site.

The protein belongs to the NfuA family. Homodimer. Requires [4Fe-4S] cluster as cofactor.

Functionally, involved in iron-sulfur cluster biogenesis. Binds a 4Fe-4S cluster, can transfer this cluster to apoproteins, and thereby intervenes in the maturation of Fe/S proteins. Could also act as a scaffold/chaperone for damaged Fe/S proteins. This Buchnera aphidicola subsp. Acyrthosiphon pisum (strain 5A) protein is Fe/S biogenesis protein NfuA.